The sequence spans 288 residues: Fructose-bisphosphate aldolase (288 aa).

Residue serine 49 participates in D-glyceraldehyde 3-phosphate binding. Residue aspartate 84 is the Proton donor of the active site. Zn(2+) is bound by residues histidine 85, aspartate 105, glutamate 135, and histidine 177. Glycine 178 serves as a coordination point for dihydroxyacetone phosphate. Residue histidine 206 coordinates Zn(2+). Dihydroxyacetone phosphate contacts are provided by residues 207-209 (GGS) and 228-231 (NINT).

Belongs to the class II fructose-bisphosphate aldolase family. In terms of assembly, homodimer. It depends on Zn(2+) as a cofactor.

It carries out the reaction beta-D-fructose 1,6-bisphosphate = D-glyceraldehyde 3-phosphate + dihydroxyacetone phosphate. Its pathway is carbohydrate degradation; glycolysis; D-glyceraldehyde 3-phosphate and glycerone phosphate from D-glucose: step 4/4. Catalyzes the aldol condensation of dihydroxyacetone phosphate (DHAP or glycerone-phosphate) with glyceraldehyde 3-phosphate (G3P) to form fructose 1,6-bisphosphate (FBP) in gluconeogenesis and the reverse reaction in glycolysis. This Mycoplasma pneumoniae (strain ATCC 29342 / M129 / Subtype 1) (Mycoplasmoides pneumoniae) protein is Fructose-bisphosphate aldolase (fba).